The sequence spans 168 residues: Sec-independent protein translocase protein TatB (168 aa).

The chain crosses the membrane as a helical span at residues 1–21 (MIDLGISKLALIGAVALIVIG). Disordered stretches follow at residues 92 to 132 (FDGS…QGAR) and 146 to 168 (VQSG…SFFE). Residues 94–107 (GSASSSSSSDTGSG) are compositionally biased toward low complexity. Residues 117 to 126 (KSHNGRKSWR) are compositionally biased toward basic residues.

This sequence belongs to the TatB family. As to quaternary structure, the Tat system comprises two distinct complexes: a TatABC complex, containing multiple copies of TatA, TatB and TatC subunits, and a separate TatA complex, containing only TatA subunits. Substrates initially bind to the TatABC complex, which probably triggers association of the separate TatA complex to form the active translocon.

Its subcellular location is the cell inner membrane. Part of the twin-arginine translocation (Tat) system that transports large folded proteins containing a characteristic twin-arginine motif in their signal peptide across membranes. Together with TatC, TatB is part of a receptor directly interacting with Tat signal peptides. TatB may form an oligomeric binding site that transiently accommodates folded Tat precursor proteins before their translocation. This chain is Sec-independent protein translocase protein TatB, found in Cupriavidus metallidurans (strain ATCC 43123 / DSM 2839 / NBRC 102507 / CH34) (Ralstonia metallidurans).